The sequence spans 362 residues: L-asparaginase 2-1 (362 aa).

An N-terminal signal peptide occupies residues 1-25 (MRSLNTLLLSLFVAMSSGAPLLKIR). N-linked (GlcNAc...) asparagine glycosylation is present at Asn29. Residues 33-359 (PSIKIFGTGG…DQIRSVFSGV (327 aa)) enclose the Asparaginase/glutaminase domain. Residue Thr43 is the O-isoaspartyl threonine intermediate of the active site. Ser89 contributes to the substrate binding site. Residue Asn93 is glycosylated (N-linked (GlcNAc...) asparagine). 122–123 (TD) serves as a coordination point for substrate. Asn239 carries N-linked (GlcNAc...) asparagine glycosylation.

The protein belongs to the asparaginase 1 family.

It localises to the secreted. Its subcellular location is the periplasm. It carries out the reaction L-asparagine + H2O = L-aspartate + NH4(+). This chain is L-asparaginase 2-1 (ASP3-1), found in Saccharomyces cerevisiae (strain ATCC 204508 / S288c) (Baker's yeast).